A 162-amino-acid chain; its full sequence is MSDKIGLFTGSFDPMTNGHLDIIERASRLFDKLYVGIFFNPHKQGFLPIENRKRGLEKALGHLENVEVVASHDELVVDVAKRLGATCLVRGLRNASDLQYEASFDYYNHQLSSDIETIYLHSRPEHLYISSSGVRELLKFGQDIACYVPESILEEIRNEKKD.

Serine 11 serves as a coordination point for substrate. Residues 11–12 (SF) and histidine 19 each bind ATP. Substrate-binding residues include lysine 43, valine 76, and arginine 90. Residues 91–93 (GLR), glutamate 101, and 126–132 (HLYISSS) contribute to the ATP site.

It belongs to the bacterial CoaD family. As to quaternary structure, homohexamer. Mg(2+) serves as cofactor.

It is found in the cytoplasm. It catalyses the reaction (R)-4'-phosphopantetheine + ATP + H(+) = 3'-dephospho-CoA + diphosphate. Its pathway is cofactor biosynthesis; coenzyme A biosynthesis; CoA from (R)-pantothenate: step 4/5. Its activity is regulated as follows. Is inhibited by a series of cycloalkyl pyrimidines, which also show suppression of bacterial growth. Reversibly transfers an adenylyl group from ATP to 4'-phosphopantetheine, yielding dephospho-CoA (dPCoA) and pyrophosphate. The chain is Phosphopantetheine adenylyltransferase from Streptococcus pneumoniae (strain ATCC BAA-255 / R6).